Reading from the N-terminus, the 476-residue chain is Glutamate--tRNA ligase (476 aa).

Residues 9-19 (PSPTGTLHLGT) carry the 'HIGH' region motif. Positions 248-252 (KLSKR) match the 'KMSKS' region motif. An ATP-binding site is contributed by Lys251.

The protein belongs to the class-I aminoacyl-tRNA synthetase family. Glutamate--tRNA ligase type 1 subfamily. Monomer.

It localises to the cytoplasm. It carries out the reaction tRNA(Glu) + L-glutamate + ATP = L-glutamyl-tRNA(Glu) + AMP + diphosphate. In terms of biological role, catalyzes the attachment of glutamate to tRNA(Glu) in a two-step reaction: glutamate is first activated by ATP to form Glu-AMP and then transferred to the acceptor end of tRNA(Glu). The sequence is that of Glutamate--tRNA ligase from Prochlorococcus marinus (strain NATL1A).